The chain runs to 104 residues: Thioredoxin (104 aa).

Residues 2 to 104 (AIVKVTDSNF…NLAEVLDKHL (103 aa)) enclose the Thioredoxin domain. C29 and C32 are joined by a disulfide.

Belongs to the thioredoxin family.

Component of the thioredoxin-thioredoxin reductase system. Participates in various redox reactions through the reversible oxidation of its active center dithiol to a disulfide and catalyzes dithiol-disulfide exchange reactions. This chain is Thioredoxin (trxA), found in Staphylococcus haemolyticus (strain JCSC1435).